The primary structure comprises 78 residues: MKLTCVLIIAVLFLTACQLITADYSRDKQEYRAVRLRDAMRYSRVRRQCADLGEECHTRFCCPGLRCEDLQVPTCLMA.

The N-terminal stretch at 1-22 (MKLTCVLIIAVLFLTACQLITA) is a signal peptide. Positions 23–45 (DYSRDKQEYRAVRLRDAMRYSRV) are excised as a propeptide. Gln48 is subject to Pyrrolidone carboxylic acid. 3 disulfide bridges follow: Cys49-Cys62, Cys56-Cys67, and Cys61-Cys75.

It belongs to the conotoxin O1 superfamily. In terms of tissue distribution, expressed by the venom duct.

The protein localises to the secreted. The sequence is that of Conotoxin ArMKLT2-0312 from Conus arenatus (Sand-dusted cone).